Reading from the N-terminus, the 326-residue chain is Autophagy protein 5 (326 aa).

Lys163 participates in a covalent cross-link: Glycyl lysine isopeptide (Lys-Gly) (interchain with G-Cter in atg12).

It belongs to the ATG5 family. As to quaternary structure, conjugated with atg12. Conjugated to atg12; which is essential for autophagy.

The protein localises to the preautophagosomal structure membrane. Functionally, involved in cytoplasm to vacuole transport (Cvt) and autophagic vesicle formation. Autophagy is essential for maintenance of amino acid levels and protein synthesis under nitrogen starvation. Required for selective autophagic degradation of the nucleus (nucleophagy). Also required for mitophagy, which eliminates defective or superfluous mitochondria in order to fulfill cellular energy requirements and prevent excess ROS production. Conjugation with atg12, through a ubiquitin-like conjugating system involving atg7 as an E1-like activating enzyme and atg10 as an E2-like conjugating enzyme, is essential for its function. The atg12-atg5 conjugate acts as an E3-like enzyme which is required for lipidation of atg8 and atg8 association to the vesicle membranes. This chain is Autophagy protein 5 (atg5), found in Aspergillus fumigatus (strain ATCC MYA-4609 / CBS 101355 / FGSC A1100 / Af293) (Neosartorya fumigata).